Here is a 508-residue protein sequence, read N- to C-terminus: MTAKPALMVLGTSSGAGKSLMTAALCRVLRRRGETPLPFKGQNMSNNAWVDQAGGEMAYSQALQAWAAGLEPECAMNPVLLKPQGDSTSELIHLGHSVGSARAEHYYRDWFKPGWKAIRQGLEALQSSHPGGRLVLEGAGSPVEVNLQKRDLTNLRLAQYLRAHCVLVADIERGGVFAQIVGTLNLLRPVERPLIKGLLINRFRGRRELFDEGQRWLEANTGVPVLGVMPWLDELFPPEDSLDLLERRGRKRSAELNIAVLKLPSLSNFSDLDPLEAEPTVQLRWVAPGEELGLPDAVVIPGSKQTLRDLAAILNSGLGAALQAYNTGGGHVFGICGGMQMLGDELCDPEGLEGGAPSGNTSQAGLGLLPLRTVFSADKALRQRSSAALWPGGSHALEIEGFELHHGLTTINNASETCKPLCRDEELGWVKPFSDHGGLVAGTYLHGVFESGPWRRRWLNQLRERKGLAPLSEQQPHHSRQRDALLDRLADAFEQHINLEPLLNSSNG.

Positions 255-454 (ELNIAVLKLP…LHGVFESGPW (200 aa)) constitute a GATase cobBQ-type domain. Cys-336 acts as the Nucleophile in catalysis. His-446 is a catalytic residue.

It belongs to the CobB/CobQ family. CobQ subfamily.

It functions in the pathway cofactor biosynthesis; adenosylcobalamin biosynthesis. Its function is as follows. Catalyzes amidations at positions B, D, E, and G on adenosylcobyrinic A,C-diamide. NH(2) groups are provided by glutamine, and one molecule of ATP is hydrogenolyzed for each amidation. The protein is Cobyric acid synthase of Synechococcus sp. (strain CC9311).